The following is a 367-amino-acid chain: Probable cinnamyl alcohol dehydrogenase (367 aa).

Cysteine 47 lines the Zn(2+) pocket. Residue threonine 49 coordinates NADP(+). Zn(2+) is bound by residues histidine 69, glutamate 70, cysteine 100, cysteine 103, cysteine 106, cysteine 114, and cysteine 163. NADP(+)-binding positions include threonine 167, glycine 188–glycine 193, serine 211–lysine 216, threonine 251, glycine 275, and serine 298–isoleucine 300.

It belongs to the zinc-containing alcohol dehydrogenase family. Homodimer. Zn(2+) serves as cofactor.

The catalysed reaction is (E)-cinnamyl alcohol + NADP(+) = (E)-cinnamaldehyde + NADPH + H(+). The enzyme catalyses (E)-coniferol + NADP(+) = (E)-coniferaldehyde + NADPH + H(+). It carries out the reaction (E)-sinapyl alcohol + NADP(+) = (E)-sinapaldehyde + NADPH + H(+). It catalyses the reaction (E)-4-coumaroyl alcohol + NADP(+) = (E)-4-coumaraldehyde + NADPH + H(+). The catalysed reaction is (E)-caffeyl alcohol + NADP(+) = (E)-caffeyl aldehyde + NADPH + H(+). The protein operates within aromatic compound metabolism; phenylpropanoid biosynthesis. Functionally, involved in lignin biosynthesis. May catalyze the final step specific for the production of lignin monomers, like coniferyl alcohol, sinapyl alcohol and 4-coumaryl alcohol. This chain is Probable cinnamyl alcohol dehydrogenase, found in Zea mays (Maize).